Reading from the N-terminus, the 841-residue chain is MAP7 domain-containing protein 1 (841 aa).

2 disordered regions span residues 1 to 151 (MESG…ERAK) and 184 to 208 (EQRLKAEQRRAALEERQRQKLEKNK). Positions 22 to 52 (PPEPRPSPEGDPSPPPPPMSALVPDTPPDTP) are enriched in pro residues. 2 positions are modified to phosphothreonine: threonine 47 and threonine 51. A phosphoserine mark is found at serine 70, serine 86, and serine 93. Residue threonine 97 is modified to Phosphothreonine. 2 positions are modified to phosphoserine: serine 113 and serine 116. Threonine 118 carries the phosphothreonine modification. Serine 123 and serine 125 each carry phosphoserine. Residues 128–222 (TKQEVKKAGE…AAIQRSVKKT (95 aa)) adopt a coiled-coil conformation. Residues 130–151 (QEVKKAGERHKLAKERREERAK) are compositionally biased toward basic and acidic residues. Residues serine 254, serine 273, serine 313, serine 366, and serine 399 each carry the phosphoserine modification. Residues 316–813 (TLPRNGRDQG…PSGDKSLSRT (498 aa)) are disordered. Positions 365-377 (ASASPLTPCSVTR) are enriched in polar residues. The segment covering 405 to 435 (RRPEASPVQKKEKKDKERENEKEKSALARER) has biased composition (basic and acidic residues). Residues 412 to 441 (VQKKEKKDKERENEKEKSALARERSLKKRQ) adopt a coiled-coil conformation. Phosphoserine occurs at positions 442, 446, 452, 454, and 460. The segment covering 460 to 473 (SPKSKARPSSPSTS) has biased composition (low complexity). Lysine 462 is covalently cross-linked (Glycyl lysine isopeptide (Lys-Gly) (interchain with G-Cter in SUMO2)). Phosphoserine is present on residues serine 479 and serine 496. Positions 479–497 (SPCPSPGPGHTLPPKPPSP) are enriched in pro residues. The span at 523 to 539 (PEDKSQSKRRASNEKES) shows a compositional bias: basic and acidic residues. Phosphoserine occurs at positions 544, 548, and 552. A compositionally biased stretch (pro residues) spans 544-561 (SPAPSPAPSPTPAPPQKE). Residue threonine 554 is modified to Phosphothreonine. The segment covering 562-576 (QPPAETPTDAAVLTS) has biased composition (low complexity). Over residues 577-586 (PPAPAPPVTP) the composition is skewed to pro residues. Positions 593–721 (TTDREEATRL…LEEIMKRTRK (129 aa)) form a coiled coil. A compositionally biased stretch (basic and acidic residues) spans 594–735 (TDREEATRLL…ETKQKQDSKE (142 aa)). A phosphoserine mark is found at serine 742 and serine 753. A phosphothreonine mark is found at threonine 813 and threonine 816. The residue at position 834 (serine 834) is a Phosphoserine.

The protein belongs to the MAP7 family.

It localises to the cytoplasm. It is found in the cytoskeleton. The protein localises to the spindle. Its subcellular location is the microtubule organizing center. The protein resides in the centrosome. It localises to the midbody. Its function is as follows. Microtubule-stabilizing protein involved in the control of cell motility and neurite outgrowth. Facilitate microtubule stabilization through the maintenance of acetylated stable microtubules. The polypeptide is MAP7 domain-containing protein 1 (MAP7D1) (Homo sapiens (Human)).